The chain runs to 140 residues: Auxin-responsive protein IAA26 (140 aa).

A disordered region spans residues 1–40 (MASYGDDGVELTELTLGPPGASARRARRGRKNGHPPPSSS). An EAR-like (transcriptional repression) motif is present at residues 14 to 18 (LTLGP). A compositionally biased stretch (basic residues) spans 24 to 33 (RRARRGRKNG). The PB1 domain maps to 45–130 (AYFVKVSMDG…SCKRMRVMRA (86 aa)).

The protein belongs to the Aux/IAA family. In terms of assembly, homodimers and heterodimers. Expressed in roots, seedlings and flowers.

The protein resides in the nucleus. Functionally, aux/IAA proteins are short-lived transcriptional factors that function as repressors of early auxin response genes at low auxin concentrations. The protein is Auxin-responsive protein IAA26 (IAA26) of Oryza sativa subsp. japonica (Rice).